The primary structure comprises 486 residues: uncharacterized protein (486 aa).

LRR repeat units lie at residues 18–39, 43–59, 60–81, 82–103, 104–125, 126–147, 148–168, 169–190, and 198–219; these read NLKK…KKLV, ELHI…NIPE, NIKS…TKLK, NITY…ILPH, SIEF…NNLV, NLKK…FPIS, IVEL…EKLI, NLKK…IKFP, and DYQS…IEYE.

This is an uncharacterized protein from Amsacta moorei entomopoxvirus (AmEPV).